We begin with the raw amino-acid sequence, 1082 residues long: Carbamoyl phosphate synthase large chain (1082 aa).

The carboxyphosphate synthetic domain stretch occupies residues 1-401 (MPKDKALKKV…ALLKAVRSLE (401 aa)). Residues Arg-129, Arg-169, Gly-175, Gly-176, Lys-208, Val-210, Glu-215, Gly-241, Ile-242, His-243, Gln-284, and Glu-298 each coordinate ATP. The region spanning 133–327 (KNMCLEIGEP…IAKVATKVAV (195 aa)) is the ATP-grasp 1 domain. The Mg(2+) site is built by Gln-284, Glu-298, and Asn-300. Mn(2+) is bound by residues Gln-284, Glu-298, and Asn-300. Residues 402-561 (TGVTGMNLPE…YSTYEDEDEA (160 aa)) form an oligomerization domain region. The tract at residues 562–944 (EPQAVRKVVV…ALYKACLSAG (383 aa)) is carbamoyl phosphate synthetic domain. The region spanning 686 to 876 (DQLVAELGIP…MVNLATRICL (191 aa)) is the ATP-grasp 2 domain. ATP is bound by residues Arg-722, Lys-761, Leu-763, Glu-767, Gly-792, Ile-793, His-794, Ser-795, Gln-835, and Glu-847. The Mg(2+) site is built by Gln-835, Glu-847, and Asn-849. Residues Gln-835, Glu-847, and Asn-849 each contribute to the Mn(2+) site. In terms of domain architecture, MGS-like spans 945–1082 (YTLPSSGKAV…PLIPLQEYVS (138 aa)). The segment at 945-1082 (YTLPSSGKAV…PLIPLQEYVS (138 aa)) is allosteric domain.

It belongs to the CarB family. As to quaternary structure, composed of two chains; the small (or glutamine) chain promotes the hydrolysis of glutamine to ammonia, which is used by the large (or ammonia) chain to synthesize carbamoyl phosphate. Tetramer of heterodimers (alpha,beta)4. Mg(2+) serves as cofactor. The cofactor is Mn(2+).

It carries out the reaction hydrogencarbonate + L-glutamine + 2 ATP + H2O = carbamoyl phosphate + L-glutamate + 2 ADP + phosphate + 2 H(+). The enzyme catalyses hydrogencarbonate + NH4(+) + 2 ATP = carbamoyl phosphate + 2 ADP + phosphate + 2 H(+). It participates in amino-acid biosynthesis; L-arginine biosynthesis; carbamoyl phosphate from bicarbonate: step 1/1. Its pathway is pyrimidine metabolism; UMP biosynthesis via de novo pathway; (S)-dihydroorotate from bicarbonate: step 1/3. Its function is as follows. Large subunit of the glutamine-dependent carbamoyl phosphate synthetase (CPSase). CPSase catalyzes the formation of carbamoyl phosphate from the ammonia moiety of glutamine, carbonate, and phosphate donated by ATP, constituting the first step of 2 biosynthetic pathways, one leading to arginine and/or urea and the other to pyrimidine nucleotides. The large subunit (synthetase) binds the substrates ammonia (free or transferred from glutamine from the small subunit), hydrogencarbonate and ATP and carries out an ATP-coupled ligase reaction, activating hydrogencarbonate by forming carboxy phosphate which reacts with ammonia to form carbamoyl phosphate. This chain is Carbamoyl phosphate synthase large chain, found in Desulforudis audaxviator (strain MP104C).